The chain runs to 247 residues: Coiled-coil domain-containing protein 124 homolog (247 aa).

The segment at 1–146 is disordered; that stretch reads MGGKKFGTNS…TTTTGSDDHE (146 aa). Positions 8–85 form a coiled coil; that stretch reads TNSKAEEARS…QEDKEIKERY (78 aa). Residues 11 to 114 are compositionally biased toward basic and acidic residues; that stretch reads KAEEARSKKA…EQKQREKELA (104 aa). Low complexity predominate over residues 122–140; sequence VVVVPTTTTTTTTTTTTTT.

The protein belongs to the CCDC124 family. As to quaternary structure, associates with translationally inactive ribosomes in the nonrotated state.

Functionally, ribosome-binding protein involved in ribosome hibernation: associates with translationally inactive ribosomes and stabilizes the nonrotated conformation of the 80S ribosome, thereby promoting ribosome preservation and storage. The chain is Coiled-coil domain-containing protein 124 homolog from Dictyostelium discoideum (Social amoeba).